A 344-amino-acid polypeptide reads, in one-letter code: Phosphoribosylformylglycinamidine cyclo-ligase (344 aa).

It belongs to the AIR synthase family.

It is found in the cytoplasm. It carries out the reaction 2-formamido-N(1)-(5-O-phospho-beta-D-ribosyl)acetamidine + ATP = 5-amino-1-(5-phospho-beta-D-ribosyl)imidazole + ADP + phosphate + H(+). It participates in purine metabolism; IMP biosynthesis via de novo pathway; 5-amino-1-(5-phospho-D-ribosyl)imidazole from N(2)-formyl-N(1)-(5-phospho-D-ribosyl)glycinamide: step 2/2. This chain is Phosphoribosylformylglycinamidine cyclo-ligase, found in Haemophilus influenzae (strain PittEE).